A 549-amino-acid chain; its full sequence is MKNINPTQTSAWQALQKHYDEMKDVTIAELFANDSDRFAKFSATFDDLMLVDFSKNRITEETLAKLQDLAKETDLAGAIKSMFSGEKINRTEDRAVLHVALRNRSNTPIIVDGKDVMPEVNAVLEKMKTFSQAIISGQWKGYTGKAITDVVNIGIGGSDLGPFMVTEALRPYKNHLTMHFVSNVDGTHIAEVLKKVNPETTLFLVASKTFTTQETMTNAHSARDWFLKSAGDEKHVAKHFAALSTNAKAVGEFGIDTANMFEFWDWVGGRYSLWSAIGLSIILSVGFDNFVELLSGAHAMDKHFSTTPAEKNLPILLALIGIWYNNFFGAETEAILPYDQYMHRFAAYFQQGNMESNGKYVDRNGNAVDYQTGPIIWGEPGTNGQHAFYQLIHQGTKMVPCDFIAPAITHNPLSDHHQKLLSNFFAQTEALAFGKSREVVEQEYRDQGKDPAQLEHVVPFKVFEGNRPTNSILLREITPFSLGALIALYEHKIFTQGAILNIFTFDQWGVELGKQLANRILPELGDDKAISSHDSSTNGLINRYKAWRA.

E355 serves as the catalytic Proton donor. Catalysis depends on residues H386 and K514.

It belongs to the GPI family.

Its subcellular location is the cytoplasm. The enzyme catalyses alpha-D-glucose 6-phosphate = beta-D-fructose 6-phosphate. It functions in the pathway carbohydrate biosynthesis; gluconeogenesis. It participates in carbohydrate degradation; glycolysis; D-glyceraldehyde 3-phosphate and glycerone phosphate from D-glucose: step 2/4. Its function is as follows. Catalyzes the reversible isomerization of glucose-6-phosphate to fructose-6-phosphate. The sequence is that of Glucose-6-phosphate isomerase from Salmonella schwarzengrund (strain CVM19633).